Consider the following 217-residue polypeptide: Pyridoxine/pyridoxamine 5'-phosphate oxidase (217 aa).

Residues 66–71, 81–82, arginine 87, lysine 88, and glutamine 110 contribute to the FMN site; these read RMVLLK and FT. Residue lysine 71 participates in substrate binding. 3 residues coordinate substrate: tyrosine 128, arginine 132, and serine 136. FMN is bound by residues 145–146 and tryptophan 190; that span reads QS. Residue 196–198 participates in substrate binding; that stretch reads RLH. Arginine 200 lines the FMN pocket.

It belongs to the pyridoxamine 5'-phosphate oxidase family. Homodimer. FMN serves as cofactor.

The catalysed reaction is pyridoxamine 5'-phosphate + O2 + H2O = pyridoxal 5'-phosphate + H2O2 + NH4(+). The enzyme catalyses pyridoxine 5'-phosphate + O2 = pyridoxal 5'-phosphate + H2O2. The protein operates within cofactor metabolism; pyridoxal 5'-phosphate salvage; pyridoxal 5'-phosphate from pyridoxamine 5'-phosphate: step 1/1. It functions in the pathway cofactor metabolism; pyridoxal 5'-phosphate salvage; pyridoxal 5'-phosphate from pyridoxine 5'-phosphate: step 1/1. Catalyzes the oxidation of either pyridoxine 5'-phosphate (PNP) or pyridoxamine 5'-phosphate (PMP) into pyridoxal 5'-phosphate (PLP). This Psychromonas ingrahamii (strain DSM 17664 / CCUG 51855 / 37) protein is Pyridoxine/pyridoxamine 5'-phosphate oxidase.